The chain runs to 90 residues: UPF0512 protein L (90 aa).

Belongs to the UPF0512 family.

In Dictyostelium discoideum (Social amoeba), this protein is UPF0512 protein L.